The following is a 258-amino-acid chain: Tryptophan synthase alpha chain (258 aa).

Residues Glu44 and Asp55 each act as proton acceptor in the active site.

This sequence belongs to the TrpA family. In terms of assembly, tetramer of two alpha and two beta chains.

The catalysed reaction is (1S,2R)-1-C-(indol-3-yl)glycerol 3-phosphate + L-serine = D-glyceraldehyde 3-phosphate + L-tryptophan + H2O. Its pathway is amino-acid biosynthesis; L-tryptophan biosynthesis; L-tryptophan from chorismate: step 5/5. The alpha subunit is responsible for the aldol cleavage of indoleglycerol phosphate to indole and glyceraldehyde 3-phosphate. This is Tryptophan synthase alpha chain from Petrotoga mobilis (strain DSM 10674 / SJ95).